The following is a 705-amino-acid chain: Putative membrane protein SCO6666 (705 aa).

13 helical membrane passes run 16-36 (VMLLWGLFLLLGFGLGTGVFG), 144-164 (LHGIDGSAVSGVHVSGGPLLG), 177-197 (NAELISLPVVLVLLLVVFGGL), 201-221 (GLPLLVAVAGIAGAFLALFGF), 232-252 (IQVTTMLGLGLAVDYALLMLV), 280-300 (LFSGLTVAVSLAGLLVFPSTF), 306-326 (LAVAAVVVVDMLAALTLLPAL), 360-380 (VAVLAVAVPALLVVALPVTGM), 504-524 (ALTVLTGIFVLLFAFTGSVLL), 528-548 (TVATTLLSLGAALGAVVWVFQ), 561-581 (LGALSLTAPPLIIAIAFGLAM), 615-635 (VVTCAALLLAVVFGAFMTGGF), and 636-656 (SPILQIGLGLTLAVLIDATVV).

The protein belongs to the resistance-nodulation-cell division (RND) (TC 2.A.6) family. MmpL subfamily.

The protein localises to the cell membrane. In Streptomyces coelicolor (strain ATCC BAA-471 / A3(2) / M145), this protein is Putative membrane protein SCO6666.